Reading from the N-terminus, the 433-residue chain is tRNA-2-methylthio-N(6)-dimethylallyladenosine synthase (433 aa).

Residues 4–119 (KKLFIQTLGC…ITQAIKTPKF (116 aa)) form the MTTase N-terminal domain. Residues Cys13, Cys50, Cys82, Cys151, Cys155, and Cys158 each coordinate [4Fe-4S] cluster. A Radical SAM core domain is found at 137–370 (RNSIYKSYIN…QNRHSEILDK (234 aa)). Residues 373–433 (KKQENKTFKV…KRMVLYGEIV (61 aa)) enclose the TRAM domain.

It belongs to the methylthiotransferase family. MiaB subfamily. As to quaternary structure, monomer. It depends on [4Fe-4S] cluster as a cofactor.

Its subcellular location is the cytoplasm. The enzyme catalyses N(6)-dimethylallyladenosine(37) in tRNA + (sulfur carrier)-SH + AH2 + 2 S-adenosyl-L-methionine = 2-methylsulfanyl-N(6)-dimethylallyladenosine(37) in tRNA + (sulfur carrier)-H + 5'-deoxyadenosine + L-methionine + A + S-adenosyl-L-homocysteine + 2 H(+). Functionally, catalyzes the methylthiolation of N6-(dimethylallyl)adenosine (i(6)A), leading to the formation of 2-methylthio-N6-(dimethylallyl)adenosine (ms(2)i(6)A) at position 37 in tRNAs that read codons beginning with uridine. The chain is tRNA-2-methylthio-N(6)-dimethylallyladenosine synthase from Campylobacter jejuni subsp. jejuni serotype O:2 (strain ATCC 700819 / NCTC 11168).